The chain runs to 562 residues: Formate--tetrahydrofolate ligase (562 aa).

Thr71 to Ser78 lines the ATP pocket.

The protein belongs to the formate--tetrahydrofolate ligase family.

The enzyme catalyses (6S)-5,6,7,8-tetrahydrofolate + formate + ATP = (6R)-10-formyltetrahydrofolate + ADP + phosphate. Its pathway is one-carbon metabolism; tetrahydrofolate interconversion. This chain is Formate--tetrahydrofolate ligase, found in Bacillus anthracis (strain A0248).